The primary structure comprises 274 residues: 3-methyl-2-oxobutanoate hydroxymethyltransferase (274 aa).

Mg(2+) is bound by residues D44 and D83. 3-methyl-2-oxobutanoate contacts are provided by residues D44–S45, D83, and K113. E115 is a binding site for Mg(2+). E182 acts as the Proton acceptor in catalysis.

This sequence belongs to the PanB family. As to quaternary structure, homodecamer; pentamer of dimers. Requires Mg(2+) as cofactor.

It is found in the cytoplasm. It catalyses the reaction 3-methyl-2-oxobutanoate + (6R)-5,10-methylene-5,6,7,8-tetrahydrofolate + H2O = 2-dehydropantoate + (6S)-5,6,7,8-tetrahydrofolate. It participates in cofactor biosynthesis; (R)-pantothenate biosynthesis; (R)-pantoate from 3-methyl-2-oxobutanoate: step 1/2. Functionally, catalyzes the reversible reaction in which hydroxymethyl group from 5,10-methylenetetrahydrofolate is transferred onto alpha-ketoisovalerate to form ketopantoate. The protein is 3-methyl-2-oxobutanoate hydroxymethyltransferase of Campylobacter jejuni subsp. doylei (strain ATCC BAA-1458 / RM4099 / 269.97).